The chain runs to 331 residues: Ketol-acid reductoisomerase (NADP(+)) (331 aa).

Residues alanine 2–threonine 182 form the KARI N-terminal Rossmann domain. NADP(+)-binding positions include tyrosine 25–glutamine 28, serine 51, serine 53, and aspartate 83–glutamine 86. Histidine 108 is an active-site residue. Glycine 134 contacts NADP(+). One can recognise a KARI C-terminal knotted domain in the interval asparagine 183–leucine 328. Mg(2+) is bound by residues aspartate 191, glutamate 195, glutamate 227, and glutamate 231. Serine 252 contributes to the substrate binding site.

It belongs to the ketol-acid reductoisomerase family. Requires Mg(2+) as cofactor.

It carries out the reaction (2R)-2,3-dihydroxy-3-methylbutanoate + NADP(+) = (2S)-2-acetolactate + NADPH + H(+). It catalyses the reaction (2R,3R)-2,3-dihydroxy-3-methylpentanoate + NADP(+) = (S)-2-ethyl-2-hydroxy-3-oxobutanoate + NADPH + H(+). It functions in the pathway amino-acid biosynthesis; L-isoleucine biosynthesis; L-isoleucine from 2-oxobutanoate: step 2/4. Its pathway is amino-acid biosynthesis; L-valine biosynthesis; L-valine from pyruvate: step 2/4. Its function is as follows. Involved in the biosynthesis of branched-chain amino acids (BCAA). Catalyzes an alkyl-migration followed by a ketol-acid reduction of (S)-2-acetolactate (S2AL) to yield (R)-2,3-dihydroxy-isovalerate. In the isomerase reaction, S2AL is rearranged via a Mg-dependent methyl migration to produce 3-hydroxy-3-methyl-2-ketobutyrate (HMKB). In the reductase reaction, this 2-ketoacid undergoes a metal-dependent reduction by NADPH to yield (R)-2,3-dihydroxy-isovalerate. In Parasynechococcus marenigrum (strain WH8102), this protein is Ketol-acid reductoisomerase (NADP(+)).